Reading from the N-terminus, the 365-residue chain is UDP-N-acetylglucosamine--N-acetylmuramyl-(pentapeptide) pyrophosphoryl-undecaprenol N-acetylglucosamine transferase (365 aa).

UDP-N-acetyl-alpha-D-glucosamine contacts are provided by residues 17–19 (TGG), Asn-129, Arg-167, Ser-194, Ile-250, 269–274 (ALTVSE), and Gln-295.

This sequence belongs to the glycosyltransferase 28 family. MurG subfamily.

It is found in the cell inner membrane. It carries out the reaction di-trans,octa-cis-undecaprenyl diphospho-N-acetyl-alpha-D-muramoyl-L-alanyl-D-glutamyl-meso-2,6-diaminopimeloyl-D-alanyl-D-alanine + UDP-N-acetyl-alpha-D-glucosamine = di-trans,octa-cis-undecaprenyl diphospho-[N-acetyl-alpha-D-glucosaminyl-(1-&gt;4)]-N-acetyl-alpha-D-muramoyl-L-alanyl-D-glutamyl-meso-2,6-diaminopimeloyl-D-alanyl-D-alanine + UDP + H(+). It functions in the pathway cell wall biogenesis; peptidoglycan biosynthesis. In terms of biological role, cell wall formation. Catalyzes the transfer of a GlcNAc subunit on undecaprenyl-pyrophosphoryl-MurNAc-pentapeptide (lipid intermediate I) to form undecaprenyl-pyrophosphoryl-MurNAc-(pentapeptide)GlcNAc (lipid intermediate II). This Shewanella halifaxensis (strain HAW-EB4) protein is UDP-N-acetylglucosamine--N-acetylmuramyl-(pentapeptide) pyrophosphoryl-undecaprenol N-acetylglucosamine transferase.